A 635-amino-acid chain; its full sequence is Extracellular metalloproteinase 1 (635 aa).

The first 19 residues, 1–19 (MHGLLLAAGLLSLPLHVLA), serve as a signal peptide directing secretion. Positions 20-246 (HPQPSTSTSL…VHNVVDYVAH (227 aa)) are excised as a propeptide. A glycan (N-linked (GlcNAc...) asparagine) is linked at Asn287. A Zn(2+)-binding site is contributed by His430. Glu431 is an active-site residue. A Zn(2+)-binding site is contributed by His434. 3 N-linked (GlcNAc...) asparagine glycosylation sites follow: Asn475, Asn594, and Asn623.

The protein belongs to the peptidase M36 family. The cofactor is Zn(2+).

The protein resides in the secreted. Functionally, secreted metalloproteinase probably acting as a virulence factor. The chain is Extracellular metalloproteinase 1 (MEP1) from Trichophyton tonsurans (Scalp ringworm fungus).